The primary structure comprises 511 residues: 3-octaprenyl-4-hydroxybenzoate carboxy-lyase (511 aa).

Residue N176 participates in Mn(2+) binding. Residues 179 to 181, 193 to 195, and 198 to 199 contribute to the prenylated FMN site; these read IYR, RWL, and RG. E242 contacts Mn(2+). D311 serves as the catalytic Proton donor.

This sequence belongs to the UbiD family. In terms of assembly, homohexamer. Prenylated FMN is required as a cofactor. The cofactor is Mn(2+).

It localises to the cell membrane. It catalyses the reaction a 4-hydroxy-3-(all-trans-polyprenyl)benzoate + H(+) = a 2-(all-trans-polyprenyl)phenol + CO2. The protein operates within cofactor biosynthesis; ubiquinone biosynthesis. Catalyzes the decarboxylation of 3-octaprenyl-4-hydroxy benzoate to 2-octaprenylphenol, an intermediate step in ubiquinone biosynthesis. The chain is 3-octaprenyl-4-hydroxybenzoate carboxy-lyase from Laribacter hongkongensis (strain HLHK9).